Consider the following 547-residue polypeptide: Undecaprenyl phosphate-alpha-4-amino-4-deoxy-L-arabinose arabinosyl transferase (547 aa).

11 helical membrane passes run 1-21 (MKLTKWALPLFFLLFYLLPLD), 83-103 (FASAAATGLSALLIVWFALQL), 111-131 (FLAGLIYLSLLIVYGIGTYSV), 174-194 (FLTKGFIALAVPVIVIVPYVI), 205-225 (FGPLAMVSAALLAAPWAIAVH), 253-273 (APFWYYLPMGLLGTLPWLGLL), 286-306 (ISPETLYLLAWVVLPLLFFSV), 311-331 (LLTYILPCFAPLAMLLAASAV), 346-366 (AWLNGLFGLICLAVLAVLALS), 378-398 (GALAVAMVIFAGWALLGFIQL), and 408-428 (SALCPMVLAVGLPWALPQSLI).

The protein belongs to the glycosyltransferase 83 family.

The protein localises to the cell inner membrane. It catalyses the reaction 4-amino-4-deoxy-alpha-L-arabinopyranosyl di-trans,octa-cis-undecaprenyl phosphate + lipid IVA = lipid IIA + di-trans,octa-cis-undecaprenyl phosphate.. It functions in the pathway lipopolysaccharide metabolism; 4-amino-4-deoxy-beta-L-arabinose-lipid A biosynthesis. In terms of biological role, catalyzes the transfer of the L-Ara4N moiety of the glycolipid undecaprenyl phosphate-alpha-L-Ara4N to lipid A. The modified arabinose is attached to lipid A and is required for resistance to polymyxin and cationic antimicrobial peptides. The chain is Undecaprenyl phosphate-alpha-4-amino-4-deoxy-L-arabinose arabinosyl transferase from Aeromonas salmonicida (strain A449).